The following is a 180-amino-acid chain: Protein PHLOEM PROTEIN 2-LIKE A9 (180 aa).

The tract at residues 1–21 (MSSQKSSHHKADSKMEQDNNR) is disordered. Over residues 9-21 (HKADSKMEQDNNR) the composition is skewed to basic and acidic residues.

The chain is Protein PHLOEM PROTEIN 2-LIKE A9 (PP2A9) from Arabidopsis thaliana (Mouse-ear cress).